A 470-amino-acid polypeptide reads, in one-letter code: Nuclear segregation protein BFR1 (470 aa).

Coiled-coil stretches lie at residues aspartate 17–asparagine 178 and asparagine 237–lysine 281. Serine 260 carries the phosphoserine modification. Position 336 is a phosphothreonine (threonine 336). The interval alanine 346–alanine 368 is disordered. Over residues lysine 349–glutamine 358 the composition is skewed to basic residues. A Phosphoserine modification is found at serine 369. A coiled-coil region spans residues asparagine 398–glutamate 469. Residues glutamine 447–asparagine 470 form a disordered region.

Implicated in secretion, nuclear segregation and in maintenance of cell size. The chain is Nuclear segregation protein BFR1 (BFR1) from Saccharomyces cerevisiae (strain ATCC 204508 / S288c) (Baker's yeast).